We begin with the raw amino-acid sequence, 425 residues long: Formyl-CoA:oxalate CoA-transferase (425 aa).

CoA is bound by residues 17-18 (QS), Arg38, 72-75 (LDTK), 96-98 (NFG), Arg104, and 136-139 (KVYE). The Nucleophile role is filled by Asp168. 247–249 (GGQ) contacts substrate.

It belongs to the CoA-transferase III family. Frc subfamily. Homodimer.

It catalyses the reaction formyl-CoA + oxalate = oxalyl-CoA + formate. Its pathway is metabolic intermediate degradation; oxalate degradation; CO(2) and formate from oxalate: step 1/2. Involved in the catabolism of oxalate and in the adapatation to low pH via the induction of the oxalate-dependent acid tolerance response (ATR). Catalyzes the transfer of the CoA moiety from formyl-CoA to oxalate. This chain is Formyl-CoA:oxalate CoA-transferase, found in Rhodopseudomonas palustris (strain HaA2).